Reading from the N-terminus, the 137-residue chain is MLQPKRTKFRKQQKGRNRGLAQSGNTVSFGDYGLKATTRGRLTARQIEAARRAINRHVKRGGKVWIRVFPDVPVTNKPLEVRQGKGKGNVEYWVAKVQPGTVLYEMEGVTEELAREAFRLAAAKLPVQTTFEYRKVM.

Positions 1-17 (MLQPKRTKFRKQQKGRN) are enriched in basic residues. Residues 1–24 (MLQPKRTKFRKQQKGRNRGLAQSG) are disordered.

This sequence belongs to the universal ribosomal protein uL16 family. In terms of assembly, part of the 50S ribosomal subunit.

Binds 23S rRNA and is also seen to make contacts with the A and possibly P site tRNAs. The polypeptide is Large ribosomal subunit protein uL16 (Dichelobacter nodosus (strain VCS1703A)).